The following is a 201-amino-acid chain: Interferon-induced transmembrane protein 10 (201 aa).

Disordered stretches follow at residues 1-23 (MAQG…DGTQ) and 60-88 (AAPA…KTDS). Topologically, residues 1–127 (MAQGPSQCPA…PDTTEVNDYY (127 aa)) are extracellular. Pro residues predominate over residues 63 to 73 (APEPSASPPMA). Residues 128–148 (LWSIFNFVYLNFCCLGFIALA) form a helical membrane-spanning segment. Residues Cys-140 and Cys-141 are each lipidated (S-palmitoyl cysteine). The Cytoplasmic portion of the chain corresponds to 149-173 (YSLKVRDKKLLNDLNGAVEDAKTAR). The chain crosses the membrane as a helical span at residues 174-194 (LFNITSSALAASCIILIFIFL). Residues 195 to 201 (RYPLTDY) lie on the Extracellular side of the membrane.

Belongs to the CD225/Dispanin family.

It localises to the cell membrane. The polypeptide is Interferon-induced transmembrane protein 10 (Ifitm10) (Mus musculus (Mouse)).